The following is a 592-amino-acid chain: Membrane protein insertase YidC (592 aa).

Transmembrane regions (helical) follow at residues 8–28, 363–385, 430–450, 493–513, and 531–551; these read LFIALGLILVILTGYQMFVMG, ALGQFGLAILALTLMVKIVMFPL, INPLAGCLPILPQIPIFFALY, IWLIGGVLGIGAWPIIMGLTM, and IFAFLPIVFTFILAPFAAGLV.

The protein belongs to the OXA1/ALB3/YidC family. Type 1 subfamily. As to quaternary structure, interacts with the Sec translocase complex via SecD. Specifically interacts with transmembrane segments of nascent integral membrane proteins during membrane integration.

Its subcellular location is the cell inner membrane. Required for the insertion and/or proper folding and/or complex formation of integral membrane proteins into the membrane. Involved in integration of membrane proteins that insert both dependently and independently of the Sec translocase complex, as well as at least some lipoproteins. Aids folding of multispanning membrane proteins. The chain is Membrane protein insertase YidC from Maricaulis maris (strain MCS10) (Caulobacter maris).